The primary structure comprises 323 residues: Probable cell division protein WhiA (323 aa).

A DNA-binding region (H-T-H motif) is located at residues 275 to 309 (TLKELGEMLTTGQVSKSGINHRLRKLDQIAERLRS).

Belongs to the WhiA family.

Functionally, involved in cell division and chromosome segregation. This chain is Probable cell division protein WhiA, found in Listeria welshimeri serovar 6b (strain ATCC 35897 / DSM 20650 / CCUG 15529 / CIP 8149 / NCTC 11857 / SLCC 5334 / V8).